We begin with the raw amino-acid sequence, 591 residues long: Potassium channel KAT4 (591 aa).

Topologically, residues Met1–Arg32 are cytoplasmic. A helical transmembrane segment spans residues Trp33–Leu53. The Extracellular segment spans residues Ser54 to Leu63. Residues Val64–Val84 form a helical membrane-spanning segment. The Cytoplasmic segment spans residues Ala85 to Pro109. A helical membrane pass occupies residues Cys110–Gly130. The Extracellular segment spans residues Lys131–Gly137. A helical; Voltage-sensor membrane pass occupies residues Leu138–Glu158. Topologically, residues Lys159–Lys172 are cytoplasmic. Residues Leu173–Phe193 form a helical membrane-spanning segment. The Extracellular segment spans residues Asn194–Thr220. The pore-forming intramembrane region spans Cys221–Ala240. At Thr241–Met246 the chain is on the extracellular side. Residues Leu247 to Ile267 form a helical membrane-spanning segment. Residues Thr268 to Ser591 are Cytoplasmic-facing. An a nucleoside 3',5'-cyclic phosphate-binding site is contributed by Leu349 to Tyr469. The KHA domain occupies Arg521–Ser591.

This sequence belongs to the potassium channel family. Plant (TC 1.A.1.4) subfamily.

The protein localises to the membrane. Probable inward-rectifying potassium channel. Assuming opened or closed conformations in response to the voltage difference across the membrane, the channel is activated by hyperpolarization. The sequence is that of Potassium channel KAT4 from Oryza sativa subsp. japonica (Rice).